The chain runs to 298 residues: Probable endonuclease 4 (298 aa).

Zn(2+)-binding residues include His70, His111, Glu146, Asp180, His183, His215, Asp228, His230, and Glu260.

It belongs to the AP endonuclease 2 family. The cofactor is Zn(2+).

It carries out the reaction Endonucleolytic cleavage to 5'-phosphooligonucleotide end-products.. Functionally, endonuclease IV plays a role in DNA repair. It cleaves phosphodiester bonds at apurinic or apyrimidinic (AP) sites, generating a 3'-hydroxyl group and a 5'-terminal sugar phosphate. The polypeptide is Probable endonuclease 4 (Halalkalibacterium halodurans (strain ATCC BAA-125 / DSM 18197 / FERM 7344 / JCM 9153 / C-125) (Bacillus halodurans)).